The primary structure comprises 501 residues: Glycerol kinase (501 aa).

An ADP-binding site is contributed by T16. ATP-binding residues include T16, T17, and S18. T16 contributes to the sn-glycerol 3-phosphate binding site. R20 contributes to the ADP binding site. Sn-glycerol 3-phosphate-binding residues include R84, E85, Y135, and D242. Glycerol-binding residues include R84, E85, Y135, D242, and Q243. ADP is bound by residues T264 and G307. ATP is bound by residues T264, G307, Q311, and G408. ADP is bound at residue G408.

It belongs to the FGGY kinase family.

The enzyme catalyses glycerol + ATP = sn-glycerol 3-phosphate + ADP + H(+). It functions in the pathway polyol metabolism; glycerol degradation via glycerol kinase pathway; sn-glycerol 3-phosphate from glycerol: step 1/1. Key enzyme in the regulation of glycerol uptake and metabolism. Catalyzes the phosphorylation of glycerol to yield sn-glycerol 3-phosphate. The chain is Glycerol kinase from Saccharolobus islandicus (strain M.16.27) (Sulfolobus islandicus).